A 748-amino-acid polypeptide reads, in one-letter code: Signal transducer and activator of transcription 4 (748 aa).

One can recognise an SH2 domain in the interval 569–664 (WIDGYVMGFV…ENPLKYLYPD (96 aa)). Position 667 is an N6-acetyllysine (K667). Y693 carries the post-translational modification Phosphotyrosine; by JAK. Position 721 is a phosphoserine; by MAP2K6 (S721).

Belongs to the transcription factor STAT family. As to quaternary structure, forms a homodimer or a heterodimer with a related family member. Interacts with ARL2BP. The SH2 domain interacts, in vitro, with IL12RB2 via a short cytoplasmic domain. Interacts with STAT1. Interacts with JUN; this complex efficiently interacts with the AP-1-related sequence of the IFN-gamma. Acetylation at Lys-667 is required for JAK2-mediated phosphorylation and activation of STAT4. Post-translationally, tyrosine phosphorylated upon IL12 and IFN-alpha activation, but not by IFN-gamma in T-lymphocytes and NK cells. Serine phosphorylation is required for maximal transcriptional activity but not for DNA binding. Phosphorylation by MAP2K6 at Ser-721 is required for full transcriptional activity induced by IL12. However this serine phosphorylation is not required for cell proliferation although critical for IFN-gamma production.

It is found in the cytoplasm. Its subcellular location is the nucleus. Its function is as follows. Transcriptional regulator mainly expressed in hematopoietic cells that plays a critical role in cellular growth, differentiation and immune response. Plays a key role in the differentiation of T-helper 1 cells and the production of interferon-gamma. Also participates in multiple neutrophil functions including chemotaxis and production of the neutrophil extracellular traps. After IL12 binding to its receptor IL12RB2, STAT4 interacts with the intracellular domain of IL12RB2 and becomes tyrosine phosphorylated. Phosphorylated STAT4 then homodimerizes and migrates to the nucleus where it can recognize STAT target sequences present in IL12 responsive genes. Although IL12 appears to be the predominant activating signal, STAT4 can also be phosphorylated and activated in response to IFN-gamma stimulation via JAK1 and TYK2 and in response to different interleukins including IL23, IL2 and IL35. Transcription activation of IFN-gamma gene is mediated by interaction with JUN that forms a complex that efficiently interacts with the AP-1-related sequence of the IFN-gamma promoter. In response to IFN-alpha/beta signaling, acts as a transcriptional repressor and suppresses IL5 and IL13 mRNA expression during response to T-cell receptor (TCR) activation. The chain is Signal transducer and activator of transcription 4 (STAT4) from Homo sapiens (Human).